A 579-amino-acid chain; its full sequence is Folliculin (579 aa).

The interval 32–82 (GAGSGDSPGQVEQAEEEEGGIQMSSRVRAHSPAEGASTDSSSPGPKKSDMC) is disordered. Residues Ser-62 and Ser-73 each carry the phosphoserine modification. The 157-residue stretch at 86–242 (RSLAVGHPGY…RNGNAARSLT (157 aa)) folds into the uDENN FLCN/SMCR8-type domain. Residues 287–310 (EKLADLEEESESWDNSEAEEEEKA) adopt a coiled-coil conformation. Residues 294 to 308 (EESESWDNSEAEEEE) are compositionally biased toward acidic residues. A disordered region spans residues 294–320 (EESESWDNSEAEEEEKAPATAEGAEGR). A phosphoserine mark is found at Ser-302, Ser-406, Ser-537, Ser-542, and Ser-571. The cDENN FLCN/SMCR8-type domain occupies 339-491 (QPPKLSVFKS…ILNKMEAALT (153 aa)). The dDENN FLCN/SMCR8-type domain maps to 493 to 558 (QNLSVDVVDQ…LLKFWMTGLS (66 aa)).

Belongs to the folliculin family. In terms of assembly, interacts (via C-terminus) with FNIP1 or FNIP2 (via C-terminus). Component of the lysosomal folliculin complex (LFC), composed of FLCN, FNIP1 (or FNIP2), RagA/RRAGA or RagB/RRAGB GDP-bound, RagC/RRAGC or RagD/RRAGD GTP-bound, and Ragulator. Interaction with FNIP1 or FNIP2 mediates indirect interaction with the PRKAA1, PRKAB1 and PRKAG1 subunits of 5'-AMP-activated protein kinase (AMPK). Interacts with HSP90AA1 in the presence of FNIP1. Interacts with HSP70, STUB1, CDC37, AHSA1, CCT2, STIP1, PTGES3 and PPP5C. Interacts with GABARAP; interaction takes place in the presence of FNIP1 and/or FNIP2. Interacts with RILP; the interaction is direct and promotes association between RILP and RAB34. Interacts with KIF3A and KIF3B. Interacts with lactate dehydrogenase LDHA, but not LDHB; the interaction is direct, may preferentially bind LDHA dimers rather than tetramers, and regulates LDHA activity, acting as an uncompetitive inhibitor. Post-translationally, phosphorylation by ULK1 modulates the interaction with GABARAP and is required to regulate autophagy. As to expression, expressed in kidney.

It localises to the lysosome membrane. The protein localises to the cytoplasm. Its subcellular location is the cytosol. The protein resides in the cell projection. It is found in the cilium. It localises to the cytoskeleton. The protein localises to the microtubule organizing center. Its subcellular location is the centrosome. The protein resides in the spindle. It is found in the nucleus. With respect to regulation, GTPase-activating activity is inhibited in the folliculin complex (LFC), which stabilizes the GDP-bound state of RagA/RRAGA (or RagB/RRAGB), because Arg-164 is located far from the RagC/RRAGC or RagD/RRAGD nucleotide pocket. Disassembly of the LFC complex upon amino acid restimulation liberates the GTPase-activating activity. Its function is as follows. Multi-functional protein, involved in both the cellular response to amino acid availability and in the regulation of glycolysis. GTPase-activating protein that plays a key role in the cellular response to amino acid availability through regulation of the non-canonical mTORC1 signaling cascade controlling the MiT/TFE factors TFEB and TFE3. Activates mTORC1 by acting as a GTPase-activating protein: specifically stimulates GTP hydrolysis by RagC/RRAGC or RagD/RRAGD, promoting the conversion to the GDP-bound state of RagC/RRAGC or RagD/RRAGD, and thereby activating the kinase activity of mTORC1. The GTPase-activating activity is inhibited during starvation and activated in presence of nutrients. Acts as a key component for non-canonical mTORC1-dependent control of the MiT/TFE factors TFEB and TFE3, while it is not involved in mTORC1-dependent phosphorylation of canonical RPS6KB1/S6K1 and EIF4EBP1/4E-BP1. In low-amino acid conditions, the lysosomal folliculin complex (LFC) is formed on the membrane of lysosomes, which inhibits the GTPase-activating activity of FLCN, inactivates mTORC1 and maximizes nuclear translocation of TFEB and TFE3. Upon amino acid restimulation, RagA/RRAGA (or RagB/RRAGB) nucleotide exchange promotes disassembly of the LFC complex and liberates the GTPase-activating activity of FLCN, leading to activation of mTORC1 and subsequent cytoplasmic retention of TFEB and TFE3. Indirectly acts as a positive regulator of Wnt signaling by promoting mTOR-dependent cytoplasmic retention of MiT/TFE factor TFE3. Required for the exit of hematopoietic stem cell from pluripotency by promoting mTOR-dependent cytoplasmic retention of TFE3, thereby increasing Wnt signaling. Involved in the control of embryonic stem cells differentiation; together with LAMTOR1 it is necessary to recruit and activate RagC/RRAGC and RagD/RRAGD at the lysosomes, and to induce exit of embryonic stem cells from pluripotency via non-canonical, mTOR-independent TFE3 inactivation. Acts as an inhibitor of browning of adipose tissue by regulating mTOR-dependent cytoplasmic retention of TFE3. In response to flow stress, regulates STK11/LKB1 accumulation and mTORC1 activation through primary cilia: may act by recruiting STK11/LKB1 to primary cilia for activation of AMPK resided at basal bodies, causing mTORC1 down-regulation. Together with FNIP1 and/or FNIP2, regulates autophagy: following phosphorylation by ULK1, interacts with GABARAP and promotes autophagy. Required for starvation-induced perinuclear clustering of lysosomes by promoting association of RILP with its effector RAB34. Regulates glycolysis by binding to lactate dehydrogenase LDHA, acting as an uncompetitive inhibitor. The chain is Folliculin from Rattus norvegicus (Rat).